The chain runs to 365 residues: Guanine nucleotide-binding protein alpha-6 subunit (365 aa).

Glycine 2 carries N-myristoyl glycine lipidation. In terms of domain architecture, G-alpha spans 42 to 364; the sequence is NRFKILLLGT…NENLRSAGLH (323 aa). The tract at residues 45-58 is G1 motif; sequence KILLLGTAESGKST. Residues 50–57, 187–193, 212–216, 281–284, and alanine 336 contribute to the GTP site; these read GTAESGKS, VHCRIST, DVGGQ, and NKYD. Serine 57 and threonine 193 together coordinate Mg(2+). The interval 185 to 193 is G2 motif; sequence DIVHCRIST. Residues 208–217 are G3 motif; that stretch reads FKMVDVGGQR. The G4 motif stretch occupies residues 277 to 284; sequence VLFLNKYD. Residues 334-339 form a G5 motif region; that stretch reads TTATDT.

It belongs to the G-alpha family. In terms of assembly, g proteins are composed of 3 units; alpha, beta and gamma. The alpha chain contains the guanine nucleotide binding site.

In terms of biological role, guanine nucleotide-binding proteins (G proteins) are involved as modulators or transducers in various transmembrane signaling systems. This Caenorhabditis briggsae protein is Guanine nucleotide-binding protein alpha-6 subunit (gpa-6).